The sequence spans 103 residues: Small ribosomal subunit protein uS14c (103 aa).

The tract at residues 34 to 56 (KVSPLSLSEKTKMQEKLQSLPRN) is disordered.

Belongs to the universal ribosomal protein uS14 family. In terms of assembly, part of the 30S ribosomal subunit.

The protein resides in the plastid. Its subcellular location is the chloroplast. In terms of biological role, binds 16S rRNA, required for the assembly of 30S particles. This chain is Small ribosomal subunit protein uS14c, found in Saccharum hybrid (Sugarcane).